The primary structure comprises 504 residues: Protein nucleotidyltransferase YdiU (504 aa).

Residues Gly99, Gly101, Arg102, Lys122, Asp134, Gly135, Arg185, and Arg192 each coordinate ATP. Asp261 (proton acceptor) is an active-site residue. Positions 262 and 271 each coordinate Mg(2+). Asp271 contacts ATP.

The protein belongs to the SELO family. It depends on Mg(2+) as a cofactor. Mn(2+) serves as cofactor.

The enzyme catalyses L-seryl-[protein] + ATP = 3-O-(5'-adenylyl)-L-seryl-[protein] + diphosphate. It carries out the reaction L-threonyl-[protein] + ATP = 3-O-(5'-adenylyl)-L-threonyl-[protein] + diphosphate. The catalysed reaction is L-tyrosyl-[protein] + ATP = O-(5'-adenylyl)-L-tyrosyl-[protein] + diphosphate. It catalyses the reaction L-histidyl-[protein] + UTP = N(tele)-(5'-uridylyl)-L-histidyl-[protein] + diphosphate. The enzyme catalyses L-seryl-[protein] + UTP = O-(5'-uridylyl)-L-seryl-[protein] + diphosphate. It carries out the reaction L-tyrosyl-[protein] + UTP = O-(5'-uridylyl)-L-tyrosyl-[protein] + diphosphate. Functionally, nucleotidyltransferase involved in the post-translational modification of proteins. It can catalyze the addition of adenosine monophosphate (AMP) or uridine monophosphate (UMP) to a protein, resulting in modifications known as AMPylation and UMPylation. This Methylococcus capsulatus (strain ATCC 33009 / NCIMB 11132 / Bath) protein is Protein nucleotidyltransferase YdiU.